The sequence spans 429 residues: Glucose-1-phosphate adenylyltransferase (429 aa).

Alpha-D-glucose 1-phosphate is bound by residues Gly-162, 177-178 (EK), and Ser-209.

It belongs to the bacterial/plant glucose-1-phosphate adenylyltransferase family. Homotetramer.

The catalysed reaction is alpha-D-glucose 1-phosphate + ATP + H(+) = ADP-alpha-D-glucose + diphosphate. It participates in glycan biosynthesis; glycogen biosynthesis. Functionally, involved in the biosynthesis of ADP-glucose, a building block required for the elongation reactions to produce glycogen. Catalyzes the reaction between ATP and alpha-D-glucose 1-phosphate (G1P) to produce pyrophosphate and ADP-Glc. In Picosynechococcus sp. (strain ATCC 27264 / PCC 7002 / PR-6) (Agmenellum quadruplicatum), this protein is Glucose-1-phosphate adenylyltransferase.